The following is a 332-amino-acid chain: MGSSGSMVKPISGFLTALIQYPVPVVESRADIDKQIQQIIKTIHSTKSGYPGLELIVFPEYSTQGLNTKKWTTEEFLCTVPGPETDLFAEACKESKVYGVFSIMEKNPGGGEPYNTAVIIDPQGEMILKYRKLNPWVPVEPWKAGDLGLPVCVGPGGSKLAVCICHDGMFPEVAREAAYKGANVLIRISGYSTQVSEQWMLTNRSNAWQNLMYTLSVNLAGYDGVFYYFGEGQVCNFDGTTLVQGHRNPWEIVTAEVYPELADQARLGWGLENNIYNLGSRGYVATPGGVKENPYTFIKDLAEGKYKVPWEDEIKVKDGSIYGYPVKKTIHS.

The region spanning 14-259 (FLTALIQYPV…WEIVTAEVYP (246 aa)) is the CN hydrolase domain. Glutamate 60 (proton acceptor) is an active-site residue. Lysine 132 (proton donor) is an active-site residue. Cysteine 165 functions as the Nucleophile in the catalytic mechanism.

The protein belongs to the carbon-nitrogen hydrolase superfamily. Aliphatic amidase family.

It catalyses the reaction formamide + H2O = formate + NH4(+). Functionally, is an aliphatic amidase with a restricted substrate specificity, as it only hydrolyzes formamide. The chain is Formamidase from Bacillus cereus (strain G9842).